We begin with the raw amino-acid sequence, 374 residues long: Flagellar P-ring protein (374 aa).

The signal sequence occupies residues 1 to 29 (MPGVGISRIVRIAVAALVALAPLMTPAHA).

Belongs to the FlgI family. As to quaternary structure, the basal body constitutes a major portion of the flagellar organelle and consists of four rings (L,P,S, and M) mounted on a central rod.

Its subcellular location is the periplasm. It localises to the bacterial flagellum basal body. In terms of biological role, assembles around the rod to form the L-ring and probably protects the motor/basal body from shearing forces during rotation. The polypeptide is Flagellar P-ring protein (Nitrobacter hamburgensis (strain DSM 10229 / NCIMB 13809 / X14)).